A 226-amino-acid polypeptide reads, in one-letter code: PKHD-type hydroxylase BP3529 (226 aa).

The Fe2OG dioxygenase domain maps to 78–178 (KIFPPLFNRY…RISAFFWLQS (101 aa)). Positions 96, 98, and 159 each coordinate Fe cation. Arg-169 contacts 2-oxoglutarate.

The cofactor is Fe(2+). L-ascorbate serves as cofactor.

This is PKHD-type hydroxylase BP3529 from Bordetella pertussis (strain Tohama I / ATCC BAA-589 / NCTC 13251).